The sequence spans 266 residues: Tryptophan synthase alpha chain (266 aa).

Residues Glu45 and Asp56 each act as proton acceptor in the active site.

Belongs to the TrpA family. As to quaternary structure, tetramer of two alpha and two beta chains.

The enzyme catalyses (1S,2R)-1-C-(indol-3-yl)glycerol 3-phosphate + L-serine = D-glyceraldehyde 3-phosphate + L-tryptophan + H2O. It participates in amino-acid biosynthesis; L-tryptophan biosynthesis; L-tryptophan from chorismate: step 5/5. The alpha subunit is responsible for the aldol cleavage of indoleglycerol phosphate to indole and glyceraldehyde 3-phosphate. This Novosphingobium aromaticivorans (strain ATCC 700278 / DSM 12444 / CCUG 56034 / CIP 105152 / NBRC 16084 / F199) protein is Tryptophan synthase alpha chain.